Consider the following 243-residue polypeptide: Orotidine 5'-phosphate decarboxylase (243 aa).

Substrate-binding positions include Asp-19, Lys-41, 69 to 78, Thr-124, Arg-185, Gln-194, Gly-214, and Arg-215; that span reads DLKFFDIPAT. Residue Lys-71 is the Proton donor of the active site.

The protein belongs to the OMP decarboxylase family. Type 1 subfamily. Homodimer.

The enzyme catalyses orotidine 5'-phosphate + H(+) = UMP + CO2. It functions in the pathway pyrimidine metabolism; UMP biosynthesis via de novo pathway; UMP from orotate: step 2/2. In terms of biological role, catalyzes the decarboxylation of orotidine 5'-monophosphate (OMP) to uridine 5'-monophosphate (UMP). The protein is Orotidine 5'-phosphate decarboxylase of Xanthomonas euvesicatoria pv. vesicatoria (strain 85-10) (Xanthomonas campestris pv. vesicatoria).